The following is a 167-amino-acid chain: Translationally-controlled tumor protein homolog (167 aa).

A TCTP domain is found at 1-167 (MIIYKDIFSN…WKHGIVEEKI (167 aa)). Residues Ser9 and Ser15 each carry the phosphoserine modification.

It belongs to the TCTP family. Interacts with the 40S and 60S ribosomal subunits. Interacts with microtubules.

It is found in the cytoplasm. The protein localises to the cytoskeleton. Its subcellular location is the mitochondrion. Involved in protein synthesis. Involved in microtubule stabilization. This chain is Translationally-controlled tumor protein homolog (TMA19), found in Saccharomyces cerevisiae (strain ATCC 204508 / S288c) (Baker's yeast).